We begin with the raw amino-acid sequence, 395 residues long: Secreted aspartyl protease 1 (395 aa).

The N-terminal stretch at 1 to 20 (MQLSIQAIIGFVVAAGLAVA) is a signal peptide. Positions 21–88 (SELPSPMTVN…HLLLDLIDKR (68 aa)) are cleaved as a propeptide — removed in mature form. An N-linked (GlcNAc...) asparagine glycan is attached at asparagine 41. The 287-residue stretch at 105–391 (WAGDVQFGQS…DMGKNRMGFA (287 aa)) folds into the Peptidase A1 domain. Residues aspartate 121 and aspartate 283 contribute to the active site. Cysteine 321 and cysteine 352 are disulfide-bonded.

The protein belongs to the peptidase A1 family.

It is found in the secreted. Its activity is regulated as follows. Inhibited by pepstatin A. In terms of biological role, dominant secreted aspartyl protease that has a clear preference for aromatic residues in the P1' position directly adjacent to the cleavage site and, in particular, Trp. In addition, it generally cleaves peptides containing Lys, Arg, Phe, Tyr, or Nle (norleucine) in the P1 position, Nle and Glu at P2, and Arg and Val at P2'. Has important roles in facilitating the interaction of the yeast with the external environment. Is able to rapidly hydrolyze Staphylococcus aureus protein A, an important S.aureus virulence factor involved in immune evasion and biofilm formation. Shows anti-biofilm properties and thus plays a role in inter-kingdom interactions, beneficial for host skin health. The polypeptide is Secreted aspartyl protease 1 (Malassezia globosa (strain ATCC MYA-4612 / CBS 7966) (Dandruff-associated fungus)).